The following is a 437-amino-acid chain: MQQFRFIDLFAGIGGFRLGLEAVGGVCVASAEIDQQAIKVYWQNWPTDGVDHNLGDITQIQQLPAHDVLVGGVPCQPWSIAGKNQAFDDPRGQLWADVIRLVQINQPKAFIFENVKGLVDPRNRLCLEIILDSFKDLGYSVFYKLLNSFDFGVAQNRDRVFIVGIQQKLDLNGFSFPEYAESDQRLYHILDNLEAPETKLESIPIQRNLFGERIEVGYNKLTPRGAFNDFFILNDIRNGPTSIHSWEIYPTTEREKHICMIIMRNRRNSRYGNCDGNPMSYSDIAELVVDLAENELQILVKKRILRQYPDGKYEFFNRRLSGGIDGTYRIFMPNARFFGTLTARGMHDEIAEINVSGANAAEYKYNFIQQVLIPKRYRPITVSEAARLQGFPSTFKFHSNQSANFRLIGNSVAPPVIVALGKRLQCVKLFEQELCEV.

The region spanning 4–431 (FRFIDLFAGI…KRLQCVKLFE (428 aa)) is the SAM-dependent MTase C5-type domain. C75 is a catalytic residue.

Belongs to the class I-like SAM-binding methyltransferase superfamily. C5-methyltransferase family.

The enzyme catalyses a 2'-deoxycytidine in DNA + S-adenosyl-L-methionine = a 5-methyl-2'-deoxycytidine in DNA + S-adenosyl-L-homocysteine + H(+). Its function is as follows. A methylase that recognizes the double-stranded sequence 5'-GGWCC-3', methylates C-? on both strands, and protects the DNA from cleavage by the HgiEI endonuclease. This system is more active than isoschizomeric RM.HgiBI. This Herpetosiphon aurantiacus (Herpetosiphon giganteus) protein is Type II methylase M.HgiEI.